The chain runs to 143 residues: Peptide methionine sulfoxide reductase B9 (143 aa).

In terms of domain architecture, MsrB spans Asp-19–Ile-140. Zn(2+)-binding residues include Cys-58, Cys-61, Cys-104, and Cys-107. An intrachain disulfide couples Cys-76 to Cys-129. The active-site Nucleophile is the Cys-129.

It belongs to the MsrB Met sulfoxide reductase family. The cofactor is Zn(2+).

The protein resides in the cytoplasm. It is found in the cytosol. It carries out the reaction L-methionyl-[protein] + [thioredoxin]-disulfide + H2O = L-methionyl-(R)-S-oxide-[protein] + [thioredoxin]-dithiol. In terms of biological role, catalyzes the reduction of methionine sulfoxide (MetSO) to methionine in proteins. Plays a protective role against oxidative stress by restoring activity to proteins that have been inactivated by methionine oxidation. MSRB family specifically reduces the MetSO R-enantiomer. In Arabidopsis thaliana (Mouse-ear cress), this protein is Peptide methionine sulfoxide reductase B9 (MSRB9).